The following is a 144-amino-acid chain: Large ribosomal subunit protein uL13 (144 aa).

The protein belongs to the universal ribosomal protein uL13 family. As to quaternary structure, part of the 50S ribosomal subunit.

This protein is one of the early assembly proteins of the 50S ribosomal subunit, although it is not seen to bind rRNA by itself. It is important during the early stages of 50S assembly. The sequence is that of Large ribosomal subunit protein uL13 from Clostridium botulinum (strain Alaska E43 / Type E3).